A 314-amino-acid polypeptide reads, in one-letter code: Hydroxyacyl-coenzyme A dehydrogenase, mitochondrial (314 aa).

Residues 1–12 (MAFVTRQFMRSV) constitute a mitochondrion transit peptide. Residues 34–39 (GGGLMG) and Asp-57 each bind NAD(+). The CoA site is built by Ser-73 and Lys-80. Lys-80 carries the post-translational modification N6-succinyllysine. Lys-81 and Lys-87 each carry N6-acetyllysine; alternate. N6-succinyllysine; alternate occurs at positions 81 and 87. Glu-122 lines the NAD(+) pocket. Lys-125 is subject to N6-acetyllysine. Lys-127 lines the NAD(+) pocket. The residue at position 127 (Lys-127) is an N6-(2-hydroxyisobutyryl)lysine. At Lys-136 the chain carries N6-acetyllysine; alternate. The residue at position 136 (Lys-136) is an N6-succinyllysine; alternate. 2 residues coordinate NAD(+): Ser-149 and Asn-173. Ser-149 is a CoA binding site. Lys-179 carries the post-translational modification N6-acetyllysine. Lys-185, Lys-192, and Lys-202 each carry N6-acetyllysine; alternate. An N6-succinyllysine; alternate mark is found at Lys-185, Lys-192, and Lys-202. Lys-206 is modified (N6-succinyllysine). 2 positions are modified to N6-acetyllysine; alternate: Lys-212 and Lys-241. N6-succinyllysine; alternate occurs at positions 212 and 241. Lys-305 lines the NAD(+) pocket. Position 312 is an N6-acetyllysine; alternate (Lys-312). Lys-312 is modified (N6-succinyllysine; alternate).

This sequence belongs to the 3-hydroxyacyl-CoA dehydrogenase family. As to quaternary structure, homodimer. Interacts with GLUD1; this interaction inhibits the activation of glutamate dehydrogenase 1 (GLUD1). In terms of processing, succinylation at Lys-81, adjacent to a coenzyme A binding site. Desuccinylated by SIRT5. In terms of tissue distribution, expressed in liver, kidney, pancreas, heart and skeletal muscle.

The protein resides in the mitochondrion matrix. It catalyses the reaction a (3S)-3-hydroxyacyl-CoA + NAD(+) = a 3-oxoacyl-CoA + NADH + H(+). The catalysed reaction is (3S)-3-hydroxybutanoyl-CoA + NAD(+) = acetoacetyl-CoA + NADH + H(+). It carries out the reaction (3S)-hydroxydecanoyl-CoA + NAD(+) = 3-oxodecanoyl-CoA + NADH + H(+). The enzyme catalyses (3S)-hydroxyhexadecanoyl-CoA + NAD(+) = 3-oxohexadecanoyl-CoA + NADH + H(+). Its pathway is lipid metabolism; fatty acid beta-oxidation. Its function is as follows. Mitochondrial fatty acid beta-oxidation enzyme that catalyzes the third step of the beta-oxidation cycle for medium and short-chain 3-hydroxy fatty acyl-CoAs (C4 to C10). Plays a role in the control of insulin secretion by inhibiting the activation of glutamate dehydrogenase 1 (GLUD1), an enzyme that has an important role in regulating amino acid-induced insulin secretion. Plays a role in the maintenance of normal spermatogenesis through the reduction of fatty acid accumulation in the testes. This chain is Hydroxyacyl-coenzyme A dehydrogenase, mitochondrial (HADH), found in Homo sapiens (Human).